Reading from the N-terminus, the 617-residue chain is Elongation factor 4 (617 aa).

The tr-type G domain occupies 17 to 203 (ERIRNFCIIA…RVCELVPHPV (187 aa)). GTP contacts are provided by residues 29-34 (DHGKST) and 150-153 (NKID).

It belongs to the TRAFAC class translation factor GTPase superfamily. Classic translation factor GTPase family. LepA subfamily.

Its subcellular location is the cell membrane. The enzyme catalyses GTP + H2O = GDP + phosphate + H(+). Its function is as follows. Required for accurate and efficient protein synthesis under certain stress conditions. May act as a fidelity factor of the translation reaction, by catalyzing a one-codon backward translocation of tRNAs on improperly translocated ribosomes. Back-translocation proceeds from a post-translocation (POST) complex to a pre-translocation (PRE) complex, thus giving elongation factor G a second chance to translocate the tRNAs correctly. Binds to ribosomes in a GTP-dependent manner. The sequence is that of Elongation factor 4 from Corynebacterium urealyticum (strain ATCC 43042 / DSM 7109).